The primary structure comprises 800 residues: Phenylalanine--tRNA ligase beta subunit (800 aa).

In terms of domain architecture, tRNA-binding spans 39 to 154; the sequence is SKDIKNLVVG…TEVEPGTDAL (116 aa). The B5 domain maps to 408–483; sequence SFVTPIDITA…RIYGYDEIPS (76 aa). Mg(2+) is bound by residues aspartate 461, aspartate 467, glutamate 470, and glutamate 471. In terms of domain architecture, FDX-ACB spans 708–800; that stretch reads PKFPGVTRDI…ALQAQGATIR (93 aa).

It belongs to the phenylalanyl-tRNA synthetase beta subunit family. Type 1 subfamily. As to quaternary structure, tetramer of two alpha and two beta subunits. Requires Mg(2+) as cofactor.

The protein resides in the cytoplasm. It catalyses the reaction tRNA(Phe) + L-phenylalanine + ATP = L-phenylalanyl-tRNA(Phe) + AMP + diphosphate + H(+). This is Phenylalanine--tRNA ligase beta subunit from Staphylococcus haemolyticus (strain JCSC1435).